Consider the following 1715-residue polypeptide: Sodium channel protein type 4 subunit alpha B (1715 aa).

Over 1–126 (MGTLLPPVGS…IFAIKILVHS (126 aa)) the chain is Cytoplasmic. One copy of the I repeat lies at 108-431 (LLSPFNSMRI…VVAMAYAEQN (324 aa)). The helical transmembrane segment at 127 to 145 (LFSLFIMATILTNCVFMTL) threads the bilayer. Over 146 to 152 (SDPPAWS) the chain is Extracellular. The chain crosses the membrane as a helical span at residues 153–173 (KTVEYVFTFIYTFEATIKVVS). The Cytoplasmic portion of the chain corresponds to 174-187 (RGFCVGQFTFLKDP). A helical membrane pass occupies residues 188 to 205 (WNWLDFMVISMAYLTELV). Residues 206-211 (DLGNVS) lie on the Extracellular side of the membrane. N-linked (GlcNAc...) asparagine glycosylation is present at Asn209. A helical membrane pass occupies residues 212 to 228 (VLRTFRVLRALKTITVI). At 229–247 (PGLKTIVGALIQSVKKLAD) the chain is on the cytoplasmic side. A helical membrane pass occupies residues 248-267 (AMVLTVFCLSVFALIGLQLF). At 268–368 (MGNLRQKCVL…PNYGYTSYDS (101 aa)) the chain is on the extracellular side. Residues Cys275 and Cys337 are joined by a disulfide bond. 3 N-linked (GlcNAc...) asparagine glycosylation sites follow: Asn284, Asn304, and Asn339. Cys346 and Cys352 form a disulfide bridge. Residues 369 to 393 (FGWAFLALFRLMTQDFWENLFQLTL) constitute an intramembrane region (pore-forming). Over 394–400 (RAAGKTY) the chain is Extracellular. The helical transmembrane segment at 401-421 (MIFFVVVIFLGSFYLINLILA) threads the bilayer. The Cytoplasmic portion of the chain corresponds to 422–515 (VVAMAYAEQN…RCLSAIVMDP (94 aa)). The II repeat unit spans residues 497–768 (CCSCWRHLKR…QIAVNRIKRA (272 aa)). Residues 516-534 (FVDLGITICIILNTIFMAM) form a helical membrane-spanning segment. At 535–545 (EHYPMSADFEE) the chain is on the extracellular side. A helical transmembrane segment spans residues 546–565 (LLSVGNLVFTGIFTCEMVLK). At 566-579 (ILAMDPYFYFQVGW) the chain is on the cytoplasmic side. A helical transmembrane segment spans residues 580-599 (NIFDSIIVTMSLVELGLANV). Topologically, residues 600-601 (QG) are extracellular. The helical transmembrane segment at 602–619 (LSVLRSFRLMRVFKLAKS) threads the bilayer. The Cytoplasmic segment spans residues 620-635 (WPTLNMLIKIIGNSVG). The helical transmembrane segment at 636 to 654 (ALGNLTLVLAIIVFIFAVV) threads the bilayer. Over 655-683 (GMQLFGKNYKDCVCRISEDCKLPRWHMND) the chain is Extracellular. Cys668 and Cys674 are disulfide-bonded. The pore-forming intramembrane region spans 684-704 (FFHAFLIIFRVLCGEWIDTMW). The Extracellular segment spans residues 705–715 (DCMEVSGQTMC). Cysteines 706 and 715 form a disulfide. The helical transmembrane segment at 716 to 734 (LIVYMMVLVIGNLVVLNLF) threads the bilayer. The Cytoplasmic portion of the chain corresponds to 735–915 (LALLLSSFSG…ACFIIVENNY (181 aa)). The interval 824 to 865 (EAESDSEDSDDDDVDEDKHSRCDESSFCSTVQDPEVKENEAD) is disordered. Acidic residues predominate over residues 825–838 (AESDSEDSDDDDVD). Residues 896–1211 (KGKVWCNIRR…KKYYNAMKKL (316 aa)) form an III repeat. Residues 916–933 (FESFIVFMILLSSGALAF) traverse the membrane as a helical segment. Over 934 to 946 (EDIYLEKHQLIKT) the chain is Extracellular. The chain crosses the membrane as a helical span at residues 947-965 (ILEYADKVFTYVFVVEMVL). At 966–979 (KWFAYGFKSYFSNA) the chain is on the cytoplasmic side. Residues 980 to 998 (WCWLDFLIVDVSLVSLTAN) form a helical membrane-spanning segment. Residues 999–1006 (ILGYSELG) are Extracellular-facing. A helical membrane pass occupies residues 1007 to 1025 (AIKSLRTLRALRPLRALSR). The Cytoplasmic portion of the chain corresponds to 1026-1042 (FEGMRVVVNALVGAVPS). Residues 1043 to 1062 (IFNVLLVCLIFWLIFSIMGV) form a helical membrane-spanning segment. Over 1063-1115 (NLFAGKFSYCFNETSQEQFDKKIVNNKTECIALIEANFTEVRWKNLKVNYDNV) the chain is Extracellular. An intrachain disulfide couples Cys1072 to Cys1092. Asn1074 and Asn1088 each carry an N-linked (GlcNAc...) asparagine glycan. An intramembrane region (pore-forming) is located at residues 1116–1137 (GIGYLSLLQVATFKGWMEIMYA). Over 1138 to 1154 (AVDSRDVESQPIYEVNI) the chain is Extracellular. A helical membrane pass occupies residues 1155–1176 (YMYLYFVIFIIFGSFFTLNLFI). Residues 1177–1239 (GVIIDNFNQQ…LVFDLVTKQI (63 aa)) are Cytoplasmic-facing. An important for rapid channel inactivation region spans residues 1195–1197 (IFM). One copy of the IV repeat lies at 1220–1517 (VPRPENALQG…WEKFDPDATQ (298 aa)). Residues 1240 to 1257 (FDVFIMVLICLNMVTMMV) form a helical membrane-spanning segment. The Extracellular segment spans residues 1258 to 1268 (ETDEQTKEKED). The chain crosses the membrane as a helical span at residues 1269 to 1287 (ILYWINVIFIVIFTTECIL). Residues 1288–1299 (KTIALRRHYFSI) lie on the Cytoplasmic side of the membrane. The chain crosses the membrane as a helical span at residues 1300-1317 (GWNVFDFVVVILSILGLL). Topologically, residues 1318–1330 (LADIIEKYFVSPT) are extracellular. Residues 1331–1347 (LFRVIRLARIGRVLRLI) traverse the membrane as a helical segment. Residues 1348–1366 (RGAKGIRTLLFALMMSLPA) lie on the Cytoplasmic side of the membrane. The chain crosses the membrane as a helical span at residues 1367–1384 (LFNIGLLLFLIMFIFSIF). The Extracellular segment spans residues 1385–1406 (GMSNFAYVKKEAMIDDMFNFET). Positions 1407–1429 (FGNSMICLFMITTSAGWDGLLSP) form an intramembrane region, pore-forming. Residues 1430 to 1458 (IMNKPPDCDPDLENPGTTVRGNCGSPAIG) lie on the Extracellular side of the membrane. Cysteines 1437 and 1452 form a disulfide. A helical membrane pass occupies residues 1459–1481 (IVFFSTYIIMSFLVVVNMYIAII). At 1482-1715 (LENFNVATEE…LGTSERESLV (234 aa)) the chain is on the cytoplasmic side. Residues 1611–1640 (EEVAARVIQRAYRKYLLQRTVRLASFTYRE) form the IQ domain.

This sequence belongs to the sodium channel (TC 1.A.1.10) family. Nav1.4/SCN4A subfamily. In terms of assembly, voltage-gated sodium (Nav) channels consist of an ion-conducting alpha subunit which is functional on its own associated with regulatory beta subunits.

The protein localises to the cell membrane. The enzyme catalyses Na(+)(in) = Na(+)(out). Pore-forming subunit of a voltage-gated sodium (Nav) channel that directly mediates the depolarizing phase of action potentials in excitable membranes. Navs, also called VGSCs (voltage-gated sodium channels) or VDSCs (voltage-dependent sodium channels), operate by switching between closed and open conformations depending on the voltage difference across the membrane. In the open conformation they allow Na(+) ions to selectively pass through the pore, along their electrochemical gradient. The influx of Na+ ions provokes membrane depolarization, initiating the propagation of electrical signals throughout cells and tissues. This Tetraodon nigroviridis (Spotted green pufferfish) protein is Sodium channel protein type 4 subunit alpha B (scn4ab).